Here is a 55-residue protein sequence, read N- to C-terminus: Large ribosomal subunit protein bL32c (55 aa).

It belongs to the bacterial ribosomal protein bL32 family.

It is found in the plastid. It localises to the chloroplast. In Nicotiana sylvestris (Wood tobacco), this protein is Large ribosomal subunit protein bL32c.